A 124-amino-acid chain; its full sequence is UPF0482 protein YpsIP31758_1865 (124 aa).

The first 32 residues, 1–32, serve as a signal peptide directing secretion; the sequence is MMKINNLPRLIRTFLPATLLMLPLVWQTPALA. Residues 47 to 68 are disordered; that stretch reads GGNNDPMSKEQARQSQQQWDET.

It belongs to the UPF0482 family.

The polypeptide is UPF0482 protein YpsIP31758_1865 (Yersinia pseudotuberculosis serotype O:1b (strain IP 31758)).